The primary structure comprises 602 residues: Elongation factor 4 (602 aa).

One can recognise a tr-type G domain in the interval 6 to 188 (DHIRNFSIVA…AIVNKLPAPK (183 aa)). Residues 18-23 (DHGKST) and 135-138 (NKID) contribute to the GTP site.

It belongs to the TRAFAC class translation factor GTPase superfamily. Classic translation factor GTPase family. LepA subfamily.

Its subcellular location is the cell inner membrane. It catalyses the reaction GTP + H2O = GDP + phosphate + H(+). Required for accurate and efficient protein synthesis under certain stress conditions. May act as a fidelity factor of the translation reaction, by catalyzing a one-codon backward translocation of tRNAs on improperly translocated ribosomes. Back-translocation proceeds from a post-translocation (POST) complex to a pre-translocation (PRE) complex, thus giving elongation factor G a second chance to translocate the tRNAs correctly. Binds to ribosomes in a GTP-dependent manner. The protein is Elongation factor 4 of Brucella suis (strain ATCC 23445 / NCTC 10510).